A 69-amino-acid polypeptide reads, in one-letter code: uncharacterized protein (69 aa).

Residues 21–64 adopt a coiled-coil conformation; that stretch reads LNLLKGGEEKISEVELKLDEMEKKMDSLLVQLEDLHRDNNDLAK.

This is an uncharacterized protein from Saccharomyces cerevisiae (strain ATCC 204508 / S288c) (Baker's yeast).